The following is a 259-amino-acid chain: Pimeloyl-[acyl-carrier protein] methyl ester esterase (259 aa).

Residues 16-241 (FVMLHGWGMN…QSAHVPFISH (226 aa)) enclose the AB hydrolase-1 domain. Residues W22, 82 to 83 (SM), and 143 to 147 (FLLLQ) each bind substrate. The active-site Nucleophile is S82. Active-site residues include D207 and H235. H235 lines the substrate pocket.

Belongs to the AB hydrolase superfamily. Carboxylesterase BioH family. Monomer.

It localises to the cytoplasm. It carries out the reaction 6-carboxyhexanoyl-[ACP] methyl ester + H2O = 6-carboxyhexanoyl-[ACP] + methanol + H(+). The protein operates within cofactor biosynthesis; biotin biosynthesis. In terms of biological role, the physiological role of BioH is to remove the methyl group introduced by BioC when the pimeloyl moiety is complete. It allows to synthesize pimeloyl-ACP via the fatty acid synthetic pathway through the hydrolysis of the ester bonds of pimeloyl-ACP esters. The sequence is that of Pimeloyl-[acyl-carrier protein] methyl ester esterase from Hamiltonella defensa subsp. Acyrthosiphon pisum (strain 5AT).